A 623-amino-acid polypeptide reads, in one-letter code: ATP-dependent lipid A-core flippase (623 aa).

5 helical membrane-spanning segments follow: residues 66 to 86 (LVLA…LAVI), 103 to 123 (VWFL…CNFF), 190 to 210 (LVVI…TLII), 290 to 310 (LTPL…AVAL), and 317 to 337 (ALTV…FDPI). In terms of domain architecture, ABC transmembrane type-1 spans 67-349 (VLAVLLMAGA…LTNLAGKMQK (283 aa)). The 237-residue stretch at 382 to 618 (VEFRAVSHRF…NGLYASLYNM (237 aa)) folds into the ABC transporter domain. Residue 416-423 (GRSGSGKT) coordinates ATP.

The protein belongs to the ABC transporter superfamily. Lipid exporter (TC 3.A.1.106) family. In terms of assembly, homodimer.

The protein localises to the cell inner membrane. The enzyme catalyses ATP + H2O + lipid A-core oligosaccharideSide 1 = ADP + phosphate + lipid A-core oligosaccharideSide 2.. Functionally, involved in lipopolysaccharide (LPS) biosynthesis. Translocates lipid A-core from the inner to the outer leaflet of the inner membrane. Transmembrane domains (TMD) form a pore in the inner membrane and the ATP-binding domain (NBD) is responsible for energy generation. The chain is ATP-dependent lipid A-core flippase from Bordetella pertussis (strain Tohama I / ATCC BAA-589 / NCTC 13251).